The sequence spans 98 residues: MSNNNYERLITKKDVYRVANERLYYLFSLAFQTGDERYIDLMERIGRRMDITLPQDIKRMYCKKCKKPYKNVRVRLKKNVITVTCLECGDIRRFQINR.

4 residues coordinate Zn(2+): Cys62, Cys65, Cys85, and Cys88.

This sequence belongs to the eukaryotic/archaeal RNase P protein component 4 family. As to quaternary structure, consists of a catalytic RNA component and at least 4-5 protein subunits. Zn(2+) serves as cofactor.

The protein localises to the cytoplasm. It carries out the reaction Endonucleolytic cleavage of RNA, removing 5'-extranucleotides from tRNA precursor.. Functionally, part of ribonuclease P, a protein complex that generates mature tRNA molecules by cleaving their 5'-ends. The polypeptide is Ribonuclease P protein component 4 (Thermoplasma volcanium (strain ATCC 51530 / DSM 4299 / JCM 9571 / NBRC 15438 / GSS1)).